A 110-amino-acid polypeptide reads, in one-letter code: Parvalbumin alpha (110 aa).

Ser2 is modified (N-acetylserine). Phosphoserine occurs at positions 2, 8, and 24. EF-hand domains are found at residues 39–74 (KSAD…FSSD) and 78–110 (LSAK…VAES). Ca(2+)-binding residues include Asp52, Asp54, Ser56, Phe58, Glu60, and Glu63. Residue Ser66 is modified to Phosphoserine. Ca(2+) contacts are provided by Asp91, Asp93, Asp95, Lys97, and Glu102.

In muscle, parvalbumin is thought to be involved in relaxation after contraction. It binds two calcium ions. This is Parvalbumin alpha (Pvalb) from Rattus norvegicus (Rat).